The primary structure comprises 529 residues: Cytochrome P450 monooxygenase fsoB (529 aa).

Residues 4 to 24 (WLLSLLIAGVVFAIFQLRTVG) traverse the membrane as a helical segment. Position 436 (Cys436) interacts with heme.

The protein belongs to the cytochrome P450 family. Heme serves as cofactor.

Its subcellular location is the membrane. In terms of biological role, cytochrome P450 monooxygenase; part of the gene cluster that mediates the biosynthesis of the enfumafungin-type antibiotic fuscoatroside. Four enzymes are sufficient to produce fuscoatroside: the terpene cyclase-glycosyl transferase fusion protein fsoAthe cytochrome P450 monoxygenases fsoD and fsoE, and the acetyltransferase fsoF; the cytochrome P450 monooxygenase fsoB and the glucose oxidase-like protein fsoC do not seem to play a role in biosynthesis of fuscoatroside. The chain is Cytochrome P450 monooxygenase fsoB from Humicola fuscoatra.